A 314-amino-acid polypeptide reads, in one-letter code: Homoserine kinase (314 aa).

Residue 95-105 (PHSRGLGSSAA) coordinates ATP.

It belongs to the GHMP kinase family. Homoserine kinase subfamily.

It is found in the cytoplasm. It catalyses the reaction L-homoserine + ATP = O-phospho-L-homoserine + ADP + H(+). Its pathway is amino-acid biosynthesis; L-threonine biosynthesis; L-threonine from L-aspartate: step 4/5. Catalyzes the ATP-dependent phosphorylation of L-homoserine to L-homoserine phosphate. The protein is Homoserine kinase of Mycobacterium sp. (strain JLS).